A 392-amino-acid chain; its full sequence is Phospho-N-acetylmuramoyl-pentapeptide-transferase (392 aa).

10 consecutive transmembrane segments (helical) span residues 28–48 (RALMAAMTALLIGLLAGPFVI), 76–96 (TMGGVLILLAIGISTLLWFDL), 100–120 (FVWIVLLVTLGFGAIGWVDDW), 137–157 (YLWQSVVGLIAALYLVFSISE), 193–213 (ISYPLGVFGFVILTYLVIVGS), 225–245 (GLAIMPVVMVGSSLGVFAYVT), 262–282 (SGELLIFCAAMAGSGLAFLWF), 289–309 (VFMGDVGALALGAALGTIAVI), 314–334 (IVLAIMGGIFVVEALSVMLQV), and 369–389 (QVVVRFWIITMLLCLVGLSTL).

It belongs to the glycosyltransferase 4 family. MraY subfamily. Mg(2+) is required as a cofactor.

It localises to the cell inner membrane. The catalysed reaction is UDP-N-acetyl-alpha-D-muramoyl-L-alanyl-gamma-D-glutamyl-meso-2,6-diaminopimeloyl-D-alanyl-D-alanine + di-trans,octa-cis-undecaprenyl phosphate = di-trans,octa-cis-undecaprenyl diphospho-N-acetyl-alpha-D-muramoyl-L-alanyl-D-glutamyl-meso-2,6-diaminopimeloyl-D-alanyl-D-alanine + UMP. It functions in the pathway cell wall biogenesis; peptidoglycan biosynthesis. In terms of biological role, catalyzes the initial step of the lipid cycle reactions in the biosynthesis of the cell wall peptidoglycan: transfers peptidoglycan precursor phospho-MurNAc-pentapeptide from UDP-MurNAc-pentapeptide onto the lipid carrier undecaprenyl phosphate, yielding undecaprenyl-pyrophosphoryl-MurNAc-pentapeptide, known as lipid I. This chain is Phospho-N-acetylmuramoyl-pentapeptide-transferase, found in Polaromonas naphthalenivorans (strain CJ2).